Reading from the N-terminus, the 912-residue chain is Metabotropic glutamate receptor 4 (912 aa).

Residues Met-1–Gly-32 form the signal peptide. Topologically, residues Lys-33–Trp-587 are extracellular. An intrachain disulfide couples Cys-67 to Cys-109. An N-linked (GlcNAc...) asparagine glycan is attached at Asn-98. L-glutamate-binding positions include Ser-159, Ala-180–Thr-182, and Tyr-230. 7 disulfides stabilise this stretch: Cys-249-Cys-538, Cys-372-Cys-388, Cys-428-Cys-435, Cys-520-Cys-539, Cys-524-Cys-542, Cys-545-Cys-557, and Cys-560-Cys-573. An N-linked (GlcNAc...) asparagine glycan is attached at Asn-301. Position 312 (Asp-312) interacts with L-glutamate. Lys-405 contacts L-glutamate. Asn-454 and Asn-484 each carry an N-linked (GlcNAc...) asparagine glycan. N-linked (GlcNAc...) asparagine glycosylation is present at Asn-569. A helical membrane pass occupies residues Ala-588–Val-610. Residues Arg-611–Glu-624 are Cytoplasmic-facing. Residues Leu-625–Ala-645 form a helical membrane-spanning segment. The Extracellular portion of the chain corresponds to Glu-646–Arg-656. A helical transmembrane segment spans residues Ile-657–Asn-675. Topologically, residues Arg-676 to Gln-699 are cytoplasmic. A helical transmembrane segment spans residues Leu-700 to Val-720. The Extracellular portion of the chain corresponds to Asp-721–Asp-750. The helical transmembrane segment at Leu-751–Ile-772 threads the bilayer. Residues Lys-773–Lys-785 are Cytoplasmic-facing. The helical transmembrane segment at Pro-786 to Thr-808 threads the bilayer. At Ser-809 to Thr-821 the chain is on the extracellular side. The chain crosses the membrane as a helical span at residues Leu-822–Phe-847. The Cytoplasmic portion of the chain corresponds to His-848–Ile-912.

The protein belongs to the G-protein coupled receptor 3 family. As to quaternary structure, interacts with PICK1. As to expression, is widely distributed in the CNS. Predominant expression is seen in the granule cells of the cerebellum.

Its subcellular location is the cell membrane. Functionally, G-protein coupled receptor for glutamate. Ligand binding causes a conformation change that triggers signaling via guanine nucleotide-binding proteins (G proteins) and modulates the activity of down-stream effectors. Signaling inhibits adenylate cyclase activity. This chain is Metabotropic glutamate receptor 4 (Grm4), found in Rattus norvegicus (Rat).